The following is a 174-amino-acid chain: U-stichotoxin-Hau2a (174 aa).

The N-terminal stretch at 1-18 (MKPIFIVALLFSTCLVNA) is a signal peptide. The propeptide occupies 19-33 (KPSINDADIKREPEP). Position 39 is a hydroxyproline (Pro-39). 2 cysteine pairs are disulfide-bonded: Cys-40-Cys-51 and Cys-43-Cys-58. Residues 61–67 (RKREPEP) constitute a propeptide that is removed on maturation. Residue Pro-73 is modified to Hydroxyproline. 2 disulfide bridges follow: Cys-74–Cys-85 and Cys-77–Cys-92. A propeptide spanning residues 95–101 (RKREPEP) is cleaved from the precursor. At Pro-107 the chain carries Hydroxyproline. Cystine bridges form between Cys-108-Cys-119 and Cys-111-Cys-126. A propeptide spanning residues 129–135 (RKREPEP) is cleaved from the precursor. Position 141 is a hydroxyproline (Pro-141). 2 cysteine pairs are disulfide-bonded: Cys-142/Cys-153 and Cys-145/Cys-160. Positions 163 to 174 (RKREPENQDLWS) are excised as a propeptide.

This sequence belongs to the sea anemone BBH family.

The protein localises to the secreted. Its subcellular location is the nematocyst. In terms of biological role, neurotoxin that paralyzes freshwater crabs at high concentration. This Heteractis aurora (Banded sea anemone) protein is U-stichotoxin-Hau2a.